Here is a 333-residue protein sequence, read N- to C-terminus: Transcription initiation factor IIB (333 aa).

The TFIIB-type zinc-finger motif lies at 33–64 (EVYRCPICGNDRFVYNYERGEIVCIVCGAVVQ). Positions 37, 40, 56, and 59 each coordinate Zn(2+). 2 tandem repeats follow at residues 149-232 (QELE…LREL) and 243-324 (LYIS…ELAK).

This sequence belongs to the TFIIB family.

Its function is as follows. Stabilizes TBP binding to an archaeal box-A promoter. Also responsible for recruiting RNA polymerase II to the pre-initiation complex (DNA-TBP-TFIIB). The chain is Transcription initiation factor IIB from Pyrobaculum islandicum (strain DSM 4184 / JCM 9189 / GEO3).